The primary structure comprises 291 residues: MKQVWASPAKLNVFLYITGQQPDGYHQLQTLFIFLNYGDEITIVPRQDEQILLMTPIPNVSHDQNLVVRAARLLQQQPGKKSQTGSLPRGAEISIKKYVPIGGGLGGGSSNAATVLLALNHLWGFNFSEDELAVLGLKLGADVPVFIYGNSAFAEGVGDRLQPVEWPLKWYLVLYSDVKISTKMIFSDPELKRNTPRRSLSTLLAAPYHNDCEPVVRKRFPKVDELLSWISQYAPARLTGTGACIFSEFNTESEARDILEKVPKGIYGFVASSTQISPLKKDFLDVRSQIS.

Residue lysine 10 is part of the active site. Proline 100 to serine 110 is a binding site for ATP. Aspartate 142 is an active-site residue.

This sequence belongs to the GHMP kinase family. IspE subfamily. As to quaternary structure, homodimer.

The enzyme catalyses 4-CDP-2-C-methyl-D-erythritol + ATP = 4-CDP-2-C-methyl-D-erythritol 2-phosphate + ADP + H(+). It functions in the pathway isoprenoid biosynthesis; isopentenyl diphosphate biosynthesis via DXP pathway; isopentenyl diphosphate from 1-deoxy-D-xylulose 5-phosphate: step 3/6. Functionally, catalyzes the phosphorylation of the position 2 hydroxy group of 4-diphosphocytidyl-2C-methyl-D-erythritol. The protein is 4-diphosphocytidyl-2-C-methyl-D-erythritol kinase of Hamiltonella defensa subsp. Acyrthosiphon pisum (strain 5AT).